The sequence spans 801 residues: MDTLTNSQDYSNVDLSLESLAEELYNIQSFNKDVILDSFDIDDYDHTQLDTTIDFNKFKIGLTILKISSKGKPQKKKLIFDLARNQIVCGKKKKVNFSEIDEIRVGHKTNIFNQFKSSKNLKEDIESIQQSFSILFSGNLRKTMDFVCSDIPERRQIVSALYHVVQESKSVNNEYNFVKREWDRVGKDSIDFSTLKKILARLNFTTSDAVLHNLMKFSDSNSDYHLDFSEFSNLLKLLRSHPEMKPVFYKYNGGNGEWVPIQGMIDFFRIEQSEVWTVEQCRDLIKKYHHERLDCISFENFEEFICGEANLAQYPHTSTVYQDTSKPLSYYFINSSHNTYLSGHQLKGLSTSEMYTNTLRQGCKCVELDVWDGNDGDPIIFHGNTLTSQIKFSHVCETIKARGFETSPYPVILSLEVHCSVPQQIMMANHMKEIFGEMLPTPLPEGTKELPTLDSLKYKILLKGHTSHTHVSAVGNSSASSSQSNIQTDDNDDDGAVDLTEYDEVDDRSASSSSSSFSLSFGSSGKKKKITKIKIAPEFEELIYLVSHGFKSGNTTKEIPSYKIHSLVEEKVKQLVQSEPREVVEASQNHLLRVYPRGTRFDSSNFDPMPGWSIGCQLAALNQQTSSEPMWINDGMFSDNGGCGYVLKPPCLLPGECETYDPTSPERIKSSKYSRLIVNVISARQLPKYTKSTKGEVIDPYVTLSIVGTHFDQKVEKTKVIDNNGFNPHWGEEFEFPLYNSQLSMLLIRVDDKDKVGHNRIGHHCIRVENIRPGYRILKLKNNFNRTIPLANLLCKFTFVE.

Residues 206 to 241 form the EF-hand domain; it reads TSDAVLHNLMKFSDSNSDYHLDFSEFSNLLKLLRSH. A PI-PLC X-box domain is found at 322–464; the sequence is QDTSKPLSYY…SLKYKILLKG (143 aa). Active-site residues include H337 and H382. K463 is a substrate binding site. Residues 471-485 are compositionally biased toward low complexity; that stretch reads VSAVGNSSASSSQSN. Positions 471–523 are disordered; sequence VSAVGNSSASSSQSNIQTDDNDDDGAVDLTEYDEVDDRSASSSSSSFSLSFGS. Residues 489–506 are compositionally biased toward acidic residues; that stretch reads DDNDDDGAVDLTEYDEVD. Ca(2+)-binding residues include D490, D492, D494, and E501. Residues 510–523 are compositionally biased toward low complexity; sequence ASSSSSSFSLSFGS. Phosphoserine is present on S524. T531 carries the post-translational modification Phosphothreonine; by PKA and PKG. The PI-PLC Y-box domain occupies 542–652; the sequence is LIYLVSHGFK…CGYVLKPPCL (111 aa). The substrate site is built by S566 and R593. The C2 domain occupies 656–781; sequence ECETYDPTSP…RPGYRILKLK (126 aa).

The catalysed reaction is a 1,2-diacyl-sn-glycero-3-phospho-(1D-myo-inositol-4,5-bisphosphate) + H2O = 1D-myo-inositol 1,4,5-trisphosphate + a 1,2-diacyl-sn-glycerol + H(+). Functionally, the production of the second messenger molecules diacylglycerol (DAG) and inositol 1,4,5-trisphosphate (IP3) is mediated by activated phosphatidylinositol-specific phospholipase C enzymes. This Dictyostelium discoideum (Social amoeba) protein is 1-phosphatidylinositol 4,5-bisphosphate phosphodiesterase (plc).